Reading from the N-terminus, the 344-residue chain is Acireductone dioxygenase (344 aa).

Positions 92, 94, 98, and 137 each coordinate Fe(2+). Ni(2+) is bound by residues His-92, His-94, Glu-98, and His-137.

Belongs to the acireductone dioxygenase (ARD) family. The cofactor is Fe(2+). It depends on Ni(2+) as a cofactor.

The protein localises to the cytoplasm. The protein resides in the nucleus. It carries out the reaction 1,2-dihydroxy-5-(methylsulfanyl)pent-1-en-3-one + O2 = 4-methylsulfanyl-2-oxobutanoate + formate + 2 H(+). The catalysed reaction is 1,2-dihydroxy-5-(methylsulfanyl)pent-1-en-3-one + O2 = 3-(methylsulfanyl)propanoate + CO + formate + 2 H(+). The protein operates within amino-acid biosynthesis; L-methionine biosynthesis via salvage pathway; L-methionine from S-methyl-5-thio-alpha-D-ribose 1-phosphate: step 5/6. Its function is as follows. Catalyzes 2 different reactions between oxygen and the acireductone 1,2-dihydroxy-3-keto-5-methylthiopentene (DHK-MTPene) depending upon the metal bound in the active site. Fe-containing acireductone dioxygenase (Fe-ARD) produces formate and 2-keto-4-methylthiobutyrate (KMTB), the alpha-ketoacid precursor of methionine in the methionine recycle pathway. Ni-containing acireductone dioxygenase (Ni-ARD) produces methylthiopropionate, carbon monoxide and formate, and does not lie on the methionine recycle pathway. This is Acireductone dioxygenase from Leishmania major.